The sequence spans 138 residues: Gas vesicle protein A (138 aa).

Positions 74–138 are disordered; the sequence is EAGPRKDPGL…STSRKKEEQE (65 aa). Low complexity predominate over residues 116–129; sequence GSSSGSSSGSSSRS.

This sequence belongs to the gas vesicle GvpA family. The gas vesicle shell is 2 nm thick and consists of a single layer of this protein. It forms helical ribs nearly perpendicular to the long axis of the vesicle.

It is found in the gas vesicle shell. Gas vesicles are hollow, gas filled proteinaceous nanostructures found in some microorganisms. During planktonic growth they allow positioning of the organism at a favorable depth for light or nutrient acquisition. GvpA forms the protein shell. It is not clear what function gas vesicles perform in soil bacteria. The sequence is that of Gas vesicle protein A from Streptomyces sp. (strain CB03234).